The chain runs to 241 residues: Pyridoxine 5'-phosphate synthase (241 aa).

Asparagine 7 is a binding site for 3-amino-2-oxopropyl phosphate. 9 to 10 (DH) contacts 1-deoxy-D-xylulose 5-phosphate. Arginine 18 contributes to the 3-amino-2-oxopropyl phosphate binding site. The Proton acceptor role is filled by histidine 43. 1-deoxy-D-xylulose 5-phosphate-binding residues include arginine 45 and histidine 50. The Proton acceptor role is filled by glutamate 70. Threonine 100 contributes to the 1-deoxy-D-xylulose 5-phosphate binding site. The active-site Proton donor is the histidine 191. 3-amino-2-oxopropyl phosphate is bound by residues glycine 192 and 213–214 (GH).

It belongs to the PNP synthase family. Homooctamer; tetramer of dimers.

It localises to the cytoplasm. It carries out the reaction 3-amino-2-oxopropyl phosphate + 1-deoxy-D-xylulose 5-phosphate = pyridoxine 5'-phosphate + phosphate + 2 H2O + H(+). Its pathway is cofactor biosynthesis; pyridoxine 5'-phosphate biosynthesis; pyridoxine 5'-phosphate from D-erythrose 4-phosphate: step 5/5. Catalyzes the complicated ring closure reaction between the two acyclic compounds 1-deoxy-D-xylulose-5-phosphate (DXP) and 3-amino-2-oxopropyl phosphate (1-amino-acetone-3-phosphate or AAP) to form pyridoxine 5'-phosphate (PNP) and inorganic phosphate. The protein is Pyridoxine 5'-phosphate synthase of Acidithiobacillus ferrooxidans (strain ATCC 23270 / DSM 14882 / CIP 104768 / NCIMB 8455) (Ferrobacillus ferrooxidans (strain ATCC 23270)).